We begin with the raw amino-acid sequence, 50 residues long: Large ribosomal subunit protein bL33B (50 aa).

It belongs to the bacterial ribosomal protein bL33 family.

The polypeptide is Large ribosomal subunit protein bL33B (Streptococcus pyogenes serotype M1).